The chain runs to 209 residues: Large ribosomal subunit protein uL3 (209 aa).

Residues 132 to 153 (ATHGNSLSHRVPGSIGQNQTPG) are disordered. Residue Gln-150 is modified to N5-methylglutamine.

The protein belongs to the universal ribosomal protein uL3 family. Part of the 50S ribosomal subunit. Forms a cluster with proteins L14 and L19. Post-translationally, methylated by PrmB.

Its function is as follows. One of the primary rRNA binding proteins, it binds directly near the 3'-end of the 23S rRNA, where it nucleates assembly of the 50S subunit. This Erwinia tasmaniensis (strain DSM 17950 / CFBP 7177 / CIP 109463 / NCPPB 4357 / Et1/99) protein is Large ribosomal subunit protein uL3.